Reading from the N-terminus, the 548-residue chain is Membrane protein insertase YidC (548 aa).

The chain crosses the membrane as a helical span at residues 6-26 (NLLVIALLFVSFMIWQAWEQD). The interval 28 to 58 (NPQPQQQQTTQTTTTAAGSAADQGVPASGQG) is disordered. Positions 29 to 42 (PQPQQQQTTQTTTT) are enriched in low complexity. Helical transmembrane passes span 350–370 (FLGN…GIMY), 420–440 (LGGC…YYML), 458–478 (LSAQ…MFFI), and 499–519 (PVIF…YYIV).

It belongs to the OXA1/ALB3/YidC family. Type 1 subfamily. Interacts with the Sec translocase complex via SecD. Specifically interacts with transmembrane segments of nascent integral membrane proteins during membrane integration.

The protein resides in the cell inner membrane. Its function is as follows. Required for the insertion and/or proper folding and/or complex formation of integral membrane proteins into the membrane. Involved in integration of membrane proteins that insert both dependently and independently of the Sec translocase complex, as well as at least some lipoproteins. Aids folding of multispanning membrane proteins. This chain is Membrane protein insertase YidC, found in Enterobacter sp. (strain 638).